The chain runs to 328 residues: Phosphate acyltransferase (328 aa).

It belongs to the PlsX family. As to quaternary structure, homodimer. Probably interacts with PlsY.

It is found in the cytoplasm. The enzyme catalyses a fatty acyl-[ACP] + phosphate = an acyl phosphate + holo-[ACP]. The protein operates within lipid metabolism; phospholipid metabolism. Its function is as follows. Catalyzes the reversible formation of acyl-phosphate (acyl-PO(4)) from acyl-[acyl-carrier-protein] (acyl-ACP). This enzyme utilizes acyl-ACP as fatty acyl donor, but not acyl-CoA. In Staphylococcus aureus (strain USA300), this protein is Phosphate acyltransferase.